We begin with the raw amino-acid sequence, 98 residues long: NADH-ubiquinone oxidoreductase chain 4L (98 aa).

The next 3 membrane-spanning stretches (helical) occupy residues 1-21, 29-49, and 61-81; these read MSLT…GLLM, SLLC…ITIL, and IILL…LVMV.

It belongs to the complex I subunit 4L family. As to quaternary structure, core subunit of respiratory chain NADH dehydrogenase (Complex I) which is composed of 45 different subunits.

The protein localises to the mitochondrion inner membrane. The enzyme catalyses a ubiquinone + NADH + 5 H(+)(in) = a ubiquinol + NAD(+) + 4 H(+)(out). In terms of biological role, core subunit of the mitochondrial membrane respiratory chain NADH dehydrogenase (Complex I) which catalyzes electron transfer from NADH through the respiratory chain, using ubiquinone as an electron acceptor. Part of the enzyme membrane arm which is embedded in the lipid bilayer and involved in proton translocation. The protein is NADH-ubiquinone oxidoreductase chain 4L (MT-ND4L) of Ectophylla alba (White bat).